The following is a 397-amino-acid chain: Na(+)/H(+) antiporter NhaA (397 aa).

The next 12 membrane-spanning stretches (helical) occupy residues 14 to 34 (ASGILLLTFAMFAMLFANTPL), 36 to 56 (DLYFDFLSMPVSIQIGLFSIY), 59 to 79 (LLMWVNDGFMAVFFVLIGLEV), 95 to 115 (IFPAIGALGGMIVPALVFTLI), 125 to 145 (GWAIPMATDIAFALGVLGLLG), 154 to 174 (IFLLALAIIDDLGAIVVIAIF), 177 to 197 (HELSTTALISAAIAIAVLIIM), 204 to 224 (AICAYMVVGLILWASVLKSGV), 254 to 274 (LLAPWCSFVILPLFAFSNAGV), 292 to 312 (VALGLLVGKTLGVFSFSFLAV), 328 to 348 (IFAVSVLCGIGFTMSMFLAGL), and 365 to 385 (LGILIGSGISAVLGYYLLKLC).

Belongs to the NhaA Na(+)/H(+) (TC 2.A.33) antiporter family.

It localises to the cell inner membrane. The enzyme catalyses Na(+)(in) + 2 H(+)(out) = Na(+)(out) + 2 H(+)(in). Its function is as follows. Na(+)/H(+) antiporter that extrudes sodium in exchange for external protons. The sequence is that of Na(+)/H(+) antiporter NhaA from Glaesserella parasuis serovar 5 (strain SH0165) (Haemophilus parasuis).